We begin with the raw amino-acid sequence, 290 residues long: 4-hydroxy-tetrahydrodipicolinate synthase (290 aa).

Residue threonine 42 coordinates pyruvate. Tyrosine 129 acts as the Proton donor/acceptor in catalysis. The active-site Schiff-base intermediate with substrate is the lysine 157. Residue isoleucine 198 coordinates pyruvate.

It belongs to the DapA family. In terms of assembly, homotetramer; dimer of dimers.

The protein resides in the cytoplasm. It carries out the reaction L-aspartate 4-semialdehyde + pyruvate = (2S,4S)-4-hydroxy-2,3,4,5-tetrahydrodipicolinate + H2O + H(+). The protein operates within amino-acid biosynthesis; L-lysine biosynthesis via DAP pathway; (S)-tetrahydrodipicolinate from L-aspartate: step 3/4. In terms of biological role, catalyzes the condensation of (S)-aspartate-beta-semialdehyde [(S)-ASA] and pyruvate to 4-hydroxy-tetrahydrodipicolinate (HTPA). This chain is 4-hydroxy-tetrahydrodipicolinate synthase, found in Chlamydia felis (strain Fe/C-56) (Chlamydophila felis).